The chain runs to 277 residues: Transcription factor HES-4-B (277 aa).

A disordered region spans residues 1–44 (MPADSMEKPTASPIAGAPANSAQTPDKPKSASEHRKSSKPIMEK). Basic and acidic residues predominate over residues 26–35 (DKPKSASEHR). In terms of domain architecture, bHLH spans 34–91 (HRKSSKPIMEKRRRARINESLGQLKTLILDALKKDSSRHSKLEKADILEMTVKHLRNL). Positions 110–143 (YRAGFNECMNEVTRFLSTCEGVNTEVRTRLLGHL) constitute an Orange domain. The segment at 258–277 (VSPLGGSTRADSAESVWRPW) is disordered. Positions 274-277 (WRPW) match the WRPW motif motif.

Transcription repression requires formation of a complex with a corepressor protein of the Groucho/TLE family. Interacts with the bHLH protein hes6; this interaction may inhibit the transcriptional repressor activity. Binds DNA in the form of a heterodimer with the bHLH protein hey1/hrt1. Interacts (via Orange domain) with id3 (via HLH domain). In terms of tissue distribution, dynamically expressed in the borders of several tissue territories. Expressed in the pre-placodal ectoderm (PPE) from gastrula stage. During gastrulation, expressed in the deep layer of the dorsal lip, the Spemann organizer and three distinct regions in the prospective neuroectoderm: neural plate border, presumptive floor plate/notoplate and anterior neural plate. At later stages, expression is localized to the anterior of the prechordal plate, the presomitic mesoderm, neural tube, neural crest derivatives and several tissues of the central nervous system, with expression in the developing floor plate continues to at least the tadpole stage. From the early tailbud stage, expressed in the dorsoanterior region of the developing pronephros. During early tailbud stages, broadly expressed within the pronephric mesoderm. and in the sensorial layer of the ectoderm covering the pronephros anlagen. During late tailbud to early tadpole stages, expressed in the ventral region of the pronephros. Expression remains in the proximal and distal tubules at late tadpole stages (stage 35).

Its subcellular location is the nucleus. Functionally, transcriptional repressor. Binds DNA on N-box motifs: 5'-CACNAG-3'. Promotes floor plate development and prechordal plate development. Required for lens development as early as the stage of lens field formation, partly through regulation of gene expression of the cell cycle inhibitor cdknx/p27(xic1). Required for formation of the neural crest downstream of multiple signaling pathways, and acts at the neural plate border via both DNA-binding dependent and independent mechanisms; acts in a DNA-binding dependent manner to repress pro-apoptotic and neural crest differentiation genes, including id3, delta1, and cdknx/p27(xic1), and thus promote the cell survival of neural plate border cells and maintain them in an undifferentiated state. Represses transcription of id3, at least in part through the repression of bmp4. On the other hand, acts in a DNA-independent manner separate from the transcriptional repressor function, to stimulate cell proliferation and promote neural crest formation. Via this DNA-independent route, acts in neurulae upstream of stat3 to transiently up-regulate the notch ligand dll1/delta1, which in turn up-regulates id3 expression. Then interacts directly with id3, which blocks the transcriptional repressor function of hes4-B/hairy2b to allow the progression of neural crest progenitors through specification and differentiation. Also acts via repressor-dependent and repressor-independent mechanisms in early gastrulae to establish the prospective anterior prechordal mesoderm identity in the Spemann organizer; induces specific genes independently from direct transcriptional regulation, and represses the genes specific for neighboring tissues through direct transcriptional repression. Modulates lateral inhibition during notch signaling and regulates the cell context dependent effects of notch (which can have inhibitory, permissive or enhancing roles in muscle or neural differentiation). Inhibits myogenesis. The chain is Transcription factor HES-4-B (hes4-b) from Xenopus laevis (African clawed frog).